The following is a 372-amino-acid chain: Erythronate-4-phosphate dehydrogenase (372 aa).

The substrate site is built by Ser45 and Thr66. An NAD(+)-binding site is contributed by Asp146. The active site involves Arg209. Asp233 is a binding site for NAD(+). Glu238 is an active-site residue. His255 acts as the Proton donor in catalysis. Residue Gly258 participates in NAD(+) binding. Tyr259 provides a ligand contact to substrate.

Belongs to the D-isomer specific 2-hydroxyacid dehydrogenase family. PdxB subfamily. Homodimer.

The protein localises to the cytoplasm. It catalyses the reaction 4-phospho-D-erythronate + NAD(+) = (R)-3-hydroxy-2-oxo-4-phosphooxybutanoate + NADH + H(+). It participates in cofactor biosynthesis; pyridoxine 5'-phosphate biosynthesis; pyridoxine 5'-phosphate from D-erythrose 4-phosphate: step 2/5. Its function is as follows. Catalyzes the oxidation of erythronate-4-phosphate to 3-hydroxy-2-oxo-4-phosphonooxybutanoate. This is Erythronate-4-phosphate dehydrogenase from Blochmanniella floridana.